The chain runs to 460 residues: Cation efflux system protein CusC (460 aa).

The signal sequence occupies residues 1 to 17 (MSPCKLLPFCVALALTG). Cysteine 18 carries N-palmitoyl cysteine lipidation. The S-diacylglycerol cysteine moiety is linked to residue cysteine 18.

The protein belongs to the outer membrane factor (OMF) (TC 1.B.17) family. As to quaternary structure, homotrimer. Component of the cus efflux system composed of CusA, CusB, CusC and CusF.

The protein localises to the cell outer membrane. In terms of biological role, forms pores that allow passive diffusion of cations across the outer membrane. Part of a cation efflux system that mediates resistance to copper and silver. This chain is Cation efflux system protein CusC (cusC), found in Escherichia coli O157:H7.